The primary structure comprises 199 residues: Small ribosomal subunit protein eS6 (199 aa).

A compositionally biased stretch (basic and acidic residues) spans 172–183; the sequence is KEQREKRSESLA. Residues 172–199 form a disordered region; the sequence is KEQREKRSESLAKKRSRLSAASKPSIAA.

It belongs to the eukaryotic ribosomal protein eS6 family. Post-translationally, ribosomal protein S6 is the major substrate of protein kinases in eukaryote ribosomes.

In terms of biological role, component of the 40S small ribosomal subunit. Plays an important role in controlling cell growth and proliferation through the selective translation of particular classes of mRNA. The sequence is that of Small ribosomal subunit protein eS6 (RPS6) from Nicotiana tabacum (Common tobacco).